The chain runs to 131 residues: Small ribosomal subunit protein uS11 (131 aa).

Belongs to the universal ribosomal protein uS11 family. As to quaternary structure, part of the 30S ribosomal subunit. Interacts with proteins S7 and S18. Binds to IF-3.

In terms of biological role, located on the platform of the 30S subunit, it bridges several disparate RNA helices of the 16S rRNA. Forms part of the Shine-Dalgarno cleft in the 70S ribosome. The protein is Small ribosomal subunit protein uS11 of Syntrophotalea carbinolica (strain DSM 2380 / NBRC 103641 / GraBd1) (Pelobacter carbinolicus).